We begin with the raw amino-acid sequence, 537 residues long: 5,6-dihydroxyindole-2-carboxylic acid oxidase (537 aa).

Residues 1–24 (MSAPKLLSLGCIFFPLLLFQQARA) form the signal peptide. Topologically, residues 25-477 (QFPRQCATVE…WPSREFSVPE (453 aa)) are lumenal, melanosome. 5 cysteine pairs are disulfide-bonded: C30-C41, C42-C65, C56-C99, C101-C110, and C113-C122. N-linked (GlcNAc...) asparagine glycans are attached at residues N96 and N104. The N-linked (GlcNAc...) asparagine glycan is linked to N181. Positions 192, 215, and 224 each coordinate Zn(2+). 2 disulfide bridges follow: C258/C261 and C290/C303. N-linked (GlcNAc...) asparagine glycans are attached at residues N304 and N350. Residues H377 and H381 each contribute to the Zn(2+) site. An N-linked (GlcNAc...) asparagine glycan is attached at N385. A Zn(2+)-binding site is contributed by H404. A helical membrane pass occupies residues 478 to 501 (IIAIAVVGALLLVALIFGTASYLI). The Cytoplasmic portion of the chain corresponds to 502–537 (RARRSMDEANQPLLTDQYQCYAEEYEKLQNPNQSVV).

This sequence belongs to the tyrosinase family. In terms of assembly, monomer. Interacts with ATP7A. Interacts with SLC45A2. The cofactor is Cu(2+). It depends on Zn(2+) as a cofactor. Post-translationally, glycosylated. Pigment cells.

Its subcellular location is the melanosome membrane. It carries out the reaction 2 5,6-dihydroxyindole-2-carboxylate + O2 = 2 indole-5,6-quinone-2-carboxylate + 2 H2O. The protein operates within pigment biosynthesis; melanin biosynthesis. Its activity is regulated as follows. The activity depends critically on the nature of the bound metal ion. Catalyzes the oxidation of 5,6-dihydroxyindole-2-carboxylic acid (DHICA) in the presence of bound Cu(2+) ions, but lacks activity in the presence of bound Zn(2+) ions. Plays a role in melanin biosynthesis. Catalyzes the oxidation of 5,6-dihydroxyindole-2-carboxylic acid (DHICA) into indole-5,6-quinone-2-carboxylic acid in the presence of bound Cu(2+) ions, but not in the presence of Zn(2+). May regulate or influence the type of melanin synthesized. Also to a lower extent, capable of hydroxylating tyrosine and producing melanin. The sequence is that of 5,6-dihydroxyindole-2-carboxylic acid oxidase from Homo sapiens (Human).